Reading from the N-terminus, the 518-residue chain is Probable bifunctional methylthioribulose-1-phosphate dehydratase/enolase-phosphatase E1 (518 aa).

The methylthioribulose-1-phosphate dehydratase stretch occupies residues 1–242 (MACCGGGRGE…AIKLYQLGID (242 aa)). Cysteine 114 provides a ligand contact to substrate. Residues histidine 132 and histidine 134 each coordinate Zn(2+). The active-site Proton donor/acceptor; for methylthioribulose-1-phosphate dehydratase activity is glutamate 157. A Zn(2+)-binding site is contributed by histidine 207. An enolase-phosphatase E1 region spans residues 279–518 (VVLDIEGTTT…FRTIKSFSEI (240 aa)). Mg(2+)-binding residues include aspartate 282 and glutamate 284. Residues 417–418 (SS) and lysine 451 each bind substrate. Residue aspartate 477 participates in Mg(2+) binding.

In the N-terminal section; belongs to the aldolase class II family. MtnB subfamily. It in the C-terminal section; belongs to the HAD-like hydrolase superfamily. MasA/MtnC family. Requires Zn(2+) as cofactor. It depends on Mg(2+) as a cofactor.

The enzyme catalyses 5-(methylsulfanyl)-D-ribulose 1-phosphate = 5-methylsulfanyl-2,3-dioxopentyl phosphate + H2O. The catalysed reaction is 5-methylsulfanyl-2,3-dioxopentyl phosphate + H2O = 1,2-dihydroxy-5-(methylsulfanyl)pent-1-en-3-one + phosphate. Its pathway is amino-acid biosynthesis; L-methionine biosynthesis via salvage pathway; L-methionine from S-methyl-5-thio-alpha-D-ribose 1-phosphate: step 2/6. The protein operates within amino-acid biosynthesis; L-methionine biosynthesis via salvage pathway; L-methionine from S-methyl-5-thio-alpha-D-ribose 1-phosphate: step 3/6. It functions in the pathway amino-acid biosynthesis; L-methionine biosynthesis via salvage pathway; L-methionine from S-methyl-5-thio-alpha-D-ribose 1-phosphate: step 4/6. The polypeptide is Probable bifunctional methylthioribulose-1-phosphate dehydratase/enolase-phosphatase E1 (Oryza sativa subsp. indica (Rice)).